Consider the following 335-residue polypeptide: E3 ubiquitin ligase rnf-121 (335 aa).

Residues 1 to 47 (MGQHGAIRLQNEVQEGMPPPHELTEEEQWAEEHRKMHEKHKGHEAMH) are Cytoplasmic-facing. The helical transmembrane segment at 48–68 (MEMMVIFMISVIVGQIFLVTW) threads the bilayer. The Lumenal portion of the chain corresponds to 69–72 (KRKH). A helical membrane pass occupies residues 73–93 (FKSYQMCTLIGMLTIPVYVCF). Residues 94–99 (NRSWYR) lie on the Cytoplasmic side of the membrane. Residues 100–120 (FLATWLVFCIFSAFIWLKASA) form a helical membrane-spanning segment. The Lumenal portion of the chain corresponds to 121–143 (QHISGGTPRFVYKWFLFLHKLSY). Residues 144 to 164 (VLGVVGYLIMMGALLGFHVLF) form a helical membrane-spanning segment. Over 165–168 (GVSQ) the chain is Cytoplasmic. Residues 169–189 (PTLMDAGILFMFYGVYYGVLG) form a helical membrane-spanning segment. Topologically, residues 190 to 335 (RDFAHICTAR…QGLTTWMGLE (146 aa)) are lumenal. The segment at 222 to 284 (CAVCGGRLDD…GKLQTCPYCK (63 aa)) adopts an RING-type; atypical zinc-finger fold.

The protein belongs to the RNF121 family. Expressed in body wall muscles, the hypodermis, seam cells, vulval cells, spermathecal cells, uterine cells and the distal tip cell (at protein level).

It localises to the endoplasmic reticulum membrane. The protein localises to the golgi apparatus membrane. It catalyses the reaction S-ubiquitinyl-[E2 ubiquitin-conjugating enzyme]-L-cysteine + [acceptor protein]-L-lysine = [E2 ubiquitin-conjugating enzyme]-L-cysteine + N(6)-ubiquitinyl-[acceptor protein]-L-lysine.. The protein operates within protein modification; protein ubiquitination. Its function is as follows. E3 ubiquitin ligase which accepts ubiquitin and transfers it to substrates such as the beta-integrin subunit pat-3, promoting their degradation by the endoplasmic reticulum-associated degradation (ERAD) pathway which is a pathway involved in ubiquitin-dependent degradation of misfolded endoplasmic reticulum proteins. Negatively regulates the unfolded protein response to reduce endoplasmic reticulum stress. Required for the cessation of distal tip cell migration at the end of larval morphogenesis. Plays a role in germline and gonad development. This Caenorhabditis elegans protein is E3 ubiquitin ligase rnf-121.